We begin with the raw amino-acid sequence, 287 residues long: 3-methyl-2-oxobutanoate hydroxymethyltransferase (287 aa).

Residues Met1–Pro19 are compositionally biased toward polar residues. Residues Met1 to Met24 are disordered. Mg(2+) is bound by residues Asp66 and Asp105. Residues Asp66–Ser67, Asp105, and Lys135 each bind 3-methyl-2-oxobutanoate. Glu137 contacts Mg(2+). Glu204 serves as the catalytic Proton acceptor.

It belongs to the PanB family. Homodecamer; pentamer of dimers. Mg(2+) is required as a cofactor.

The protein resides in the cytoplasm. The catalysed reaction is 3-methyl-2-oxobutanoate + (6R)-5,10-methylene-5,6,7,8-tetrahydrofolate + H2O = 2-dehydropantoate + (6S)-5,6,7,8-tetrahydrofolate. The protein operates within cofactor biosynthesis; (R)-pantothenate biosynthesis; (R)-pantoate from 3-methyl-2-oxobutanoate: step 1/2. Functionally, catalyzes the reversible reaction in which hydroxymethyl group from 5,10-methylenetetrahydrofolate is transferred onto alpha-ketoisovalerate to form ketopantoate. This Sphingopyxis alaskensis (strain DSM 13593 / LMG 18877 / RB2256) (Sphingomonas alaskensis) protein is 3-methyl-2-oxobutanoate hydroxymethyltransferase.